The primary structure comprises 171 residues: Protein phosphatase 1 regulatory subunit 1A (171 aa).

At methionine 1 the chain carries N-acetylmethionine. Positions 1–171 are disordered; sequence MEPDNSPRKI…PLDSQGASLV (171 aa). The essential for activity stretch occupies residues 9–12; it reads KIQF. Residues 19-29 are compositionally biased toward basic and acidic residues; the sequence is PHLDPEAAEQI. Position 35 is a phosphothreonine (threonine 35). Residues 42-54 form an essential for activity region; it reads TSDQSSPEIDEDR. Phosphoserine is present on residues serine 43, serine 46, serine 47, and serine 67. Residues 122–146 are compositionally biased toward polar residues; the sequence is GSASRPDTPGTAQKSAESNPKTQEQ. Residues 143–171 are interaction with PPP1R15A; that stretch reads TQEQCGVEPRTEDSSAHMLPLDSQGASLV.

It belongs to the protein phosphatase inhibitor 1 family. In terms of assembly, interacts with PPP1R15A. Phosphorylation of Thr-35 is required for activity.

Functionally, inhibitor of protein-phosphatase 1. This protein may be important in hormonal control of glycogen metabolism. Hormones that elevate intracellular cAMP increase I-1 activity in many tissues. I-1 activation may impose cAMP control over proteins that are not directly phosphorylated by PKA. Following a rise in intracellular calcium, I-1 is inactivated by calcineurin (or PP2B). Does not inhibit type-2 phosphatases. The sequence is that of Protein phosphatase 1 regulatory subunit 1A (Ppp1r1a) from Mus musculus (Mouse).